Reading from the N-terminus, the 229-residue chain is Enolase-phosphatase E1 (229 aa).

It belongs to the HAD-like hydrolase superfamily. MasA/MtnC family. As to quaternary structure, monomer. The cofactor is Mg(2+).

It catalyses the reaction 5-methylsulfanyl-2,3-dioxopentyl phosphate + H2O = 1,2-dihydroxy-5-(methylsulfanyl)pent-1-en-3-one + phosphate. Its pathway is amino-acid biosynthesis; L-methionine biosynthesis via salvage pathway; L-methionine from S-methyl-5-thio-alpha-D-ribose 1-phosphate: step 3/6. It functions in the pathway amino-acid biosynthesis; L-methionine biosynthesis via salvage pathway; L-methionine from S-methyl-5-thio-alpha-D-ribose 1-phosphate: step 4/6. Functionally, bifunctional enzyme that catalyzes the enolization of 2,3-diketo-5-methylthiopentyl-1-phosphate (DK-MTP-1-P) into the intermediate 2-hydroxy-3-keto-5-methylthiopentenyl-1-phosphate (HK-MTPenyl-1-P), which is then dephosphorylated to form the acireductone 1,2-dihydroxy-3-keto-5-methylthiopentene (DHK-MTPene). The protein is Enolase-phosphatase E1 of Pectobacterium carotovorum subsp. carotovorum (strain PC1).